The primary structure comprises 277 residues: Soluble NSF attachment protein 29 (277 aa).

A compositionally biased stretch (basic and acidic residues) spans 1-11 (MSRNPFDDDYR). Disordered regions lie at residues 1-30 (MSRN…MGHY), 49-73 (ESLD…STAQ), and 117-170 (KFTK…ESSR). The span at 14 to 28 (AASSTMPVKSYTTMG) shows a compositional bias: polar residues. The region spanning 44 to 106 (EKTLQESLDS…QMTQRNLNSL (63 aa)) is the t-SNARE coiled-coil homology 1 domain. Positions 49–65 (ESLDSTERSRRHLENSE) are enriched in basic and acidic residues. Polar residues predominate over residues 134-170 (SKSASRLSETATNLSSGGGSATFSGPSGQRTLTESSR). Positions 179–241 (EAMDNQIDEN…RDQDKQMQKI (63 aa)) constitute a t-SNARE coiled-coil homology 2 domain.

The protein belongs to the SNAP-25 family.

The protein resides in the synapse. The protein localises to the synaptosome. In terms of biological role, SNAREs, soluble N-ethylmaleimide-sensitive factor-attachment protein receptors, are essential proteins for fusion of cellular membranes. SNAREs localized on opposing membranes assemble to form a trans-SNARE complex, an extended, parallel four alpha-helical bundle that drives membrane fusion. Plays a role in the processing and secretion of the aspartic protease hrg-7 from the intestine. This Caenorhabditis elegans protein is Soluble NSF attachment protein 29.